The primary structure comprises 146 residues: MKKVLLVNGPNLNRLGVREVNVYGKGTLATLEADMKQEAETMGVELECFQSNHEGAIIDRIHEAEDIYEGIILNPGAFTHYSYAIRDAIASISIPVIEVHISNIHQRESFRHESVTAAVCAGQIVGFGFYGYKLALFALMEKLREA.

Y23 (proton acceptor) is an active-site residue. Substrate contacts are provided by N74, H80, and D87. Residue H100 is the Proton donor of the active site. Residues 101–102 and R111 contribute to the substrate site; that span reads IS.

The protein belongs to the type-II 3-dehydroquinase family. In terms of assembly, homododecamer.

It catalyses the reaction 3-dehydroquinate = 3-dehydroshikimate + H2O. It participates in metabolic intermediate biosynthesis; chorismate biosynthesis; chorismate from D-erythrose 4-phosphate and phosphoenolpyruvate: step 3/7. Catalyzes a trans-dehydration via an enolate intermediate. The protein is 3-dehydroquinate dehydratase of Bacillus cereus (strain ATCC 10987 / NRS 248).